We begin with the raw amino-acid sequence, 117 residues long: Prefoldin subunit beta (117 aa).

Belongs to the prefoldin subunit beta family. In terms of assembly, heterohexamer of two alpha and four beta subunits.

The protein localises to the cytoplasm. In terms of biological role, molecular chaperone capable of stabilizing a range of proteins. Seems to fulfill an ATP-independent, HSP70-like function in archaeal de novo protein folding. This chain is Prefoldin subunit beta, found in Thermococcus gammatolerans (strain DSM 15229 / JCM 11827 / EJ3).